The primary structure comprises 588 residues: Synaptotagmin-3 (588 aa).

Topologically, residues 1–54 are vesicular; the sequence is MSGDYEDDLCRRALILVSDLCARIRDADTNDRCQEFNELRIRGYPRGPDADISV. Positions 10–34 are cysteine motif; the sequence is CRRALILVSDLCARIRDADTNDRCQ. Residues 55-75 form a helical membrane-spanning segment; it reads SLLSVIVTFCGIVLLGVSLFV. The Cytoplasmic segment spans residues 76–588; the sequence is SWKLCWVPWR…KGLSEKENSE (513 aa). Disordered stretches follow at residues 129–161, 183–222, and 238–257; these read GGPH…PEPS, PSQT…VTSL, and QTLT…ALPL. The span at 183–205 shows a compositional bias: low complexity; the sequence is PSQTSPELPSEGGTGSGLLLLPP. A compositionally biased stretch (polar residues) spans 213 to 222; that stretch reads AQSHQQVTSL. R286 is subject to Omega-N-methylarginine. C2 domains follow at residues 297-418 and 429-563; these read PCGR…PLWR and DLGE…EHWH. D328, D334, D386, F387, D388, S391, D394, D460, D466, D520, and D522 together coordinate Ca(2+).

It belongs to the synaptotagmin family. In terms of assembly, homodimer; disulfide-linked via the cysteine motif. Can also form heterodimers with SYT6, SYT9 and SYT10. Ca(2+) serves as cofactor. Brain, various endocrine tissues and hormone-secreting clonal cells.

The protein localises to the cell membrane. It localises to the cytoplasmic vesicle. It is found in the secretory vesicle membrane. Functionally, ca(2+) sensor involved in Ca(2+)-dependent exocytosis of secretory vesicles through Ca(2+) and phospholipid binding to the C2 domain. Ca(2+) induces binding of the C2-domains to phospholipid membranes and to assembled SNARE-complexes; both actions contribute to triggering exocytosis. Plays a role in dendrite formation by melanocytes. This chain is Synaptotagmin-3 (Syt3), found in Rattus norvegicus (Rat).